Here is a 400-residue protein sequence, read N- to C-terminus: Proline-rich protein 5 (400 aa).

Residues 301 to 358 (TDSTSKLSMAGTKPPGEGERPPISNGQFPPLHNLSDSQQGLYNSQRDSPLLPAPSSSP) form a disordered region. Polar residues predominate over residues 334-347 (LSDSQQGLYNSQRD). A compositionally biased stretch (low complexity) spans 348-358 (SPLLPAPSSSP).

This sequence belongs to the PROTOR family. Associated component of the mechanistic target of rapamycin complex 2 (mTORC2).

Associated subunit of mTORC2, which regulates cell growth and survival in response to hormonal signals. This is Proline-rich protein 5 (prr5) from Xenopus laevis (African clawed frog).